Consider the following 597-residue polypeptide: Zinc finger CCCH domain-containing protein 29 (597 aa).

2 ANK repeats span residues 76-106 (EERT…DVNR) and 111-143 (EKVT…SPNC). C3H1-type zinc fingers lie at residues 254–281 (PYTC…HGVF) and 289–313 (QYRT…HRRD). Residues 320-337 (ASTGSAMVSPRSSNQSPE) are compositionally biased toward polar residues. The segment at 320 to 341 (ASTGSAMVSPRSSNQSPEMSVM) is disordered.

In terms of tissue distribution, expressed in roots and anthers.

Its subcellular location is the nucleus. In terms of biological role, involved in salt stress response. May positively modulate plant tolerance to salt stress. This Arabidopsis thaliana (Mouse-ear cress) protein is Zinc finger CCCH domain-containing protein 29.